The chain runs to 430 residues: MENPFEITAVVAREILDSRGNPTVEVEVYTPISMGRAAVPSGASTGTHEALELRDGGKRYHGKGVRRAVENVNKIIAPELIGMDVTWQRDIDTLMLELDGTENKSNLGANAILGVSLAVAKAAANALGLPLYQYIGGTNAYVMPVPMSNVINGGVHAGNELDFQEFMIMPVGADSFREAIRWVSETYHVLKKVIAEKYGKDAINVGDEGGFAPPMKEVTEPLETLIKAIEEAGYKPGDEIALAIDAASSEFYHPDIGKYVVAGKEYTREELVDLYKELVSAYPIVSIEDPFQEEDWEGFKLITRELGGKIQIVGDDLFVTNPKRIRKGIEMGAANALLLKVNQIGTLSEAIDAAYTAFRAGYGVVVSHRSGETEDATIADLAVALNAGQIKTGAPARSDRNAKYNQLIRIEEELEGIAHYPGRKFRNPFF.

Glutamine 164 contacts (2R)-2-phosphoglycerate. Residue glutamate 208 is the Proton donor of the active site. Mg(2+) is bound by residues aspartate 245, glutamate 288, and aspartate 315. (2R)-2-phosphoglycerate contacts are provided by lysine 340, arginine 369, serine 370, and lysine 391. Lysine 340 functions as the Proton acceptor in the catalytic mechanism.

The protein belongs to the enolase family. Mg(2+) is required as a cofactor.

Its subcellular location is the cytoplasm. The protein resides in the secreted. The protein localises to the cell surface. It carries out the reaction (2R)-2-phosphoglycerate = phosphoenolpyruvate + H2O. It participates in carbohydrate degradation; glycolysis; pyruvate from D-glyceraldehyde 3-phosphate: step 4/5. In terms of biological role, catalyzes the reversible conversion of 2-phosphoglycerate (2-PG) into phosphoenolpyruvate (PEP). It is essential for the degradation of carbohydrates via glycolysis. This chain is Enolase, found in Thermococcus onnurineus (strain NA1).